The chain runs to 318 residues: MLTTNILCLIIPILLAVAFLTLVERKILGYMQFRKGPNIVGPYGLLQPAADATKLFTKEPLHPLTSSKFMFTIAPTLALTLALTLWIPLPMPYPLIDLNLGILFILAVSSLAVYSILWSGWASNSKYALIGALRAVAQTISYEVTLAIILLSLVLTNGSFTLSTLTTTQEHMWLVLPTWPLTMMWFTSTLAETNRAPFDLSEGESELVSGFNVEYAAGPFALFFMAEYANIILMNSLTTALFFGAFHNPSLPELHTINFITKTLILTTMFLWIRASYPRFRYDQLMHLLWKNFLPLTLAMCMWHVSTSISFASIPPQT.

A run of 8 helical transmembrane segments spans residues 3–23 (TTNI…LTLV), 69–89 (FMFT…WIPL), 100–120 (LGIL…LWSG), 135–155 (AVAQ…SLVL), 171–191 (HMWL…STLA), 213–233 (VEYA…NIIL), 253–273 (ELHT…FLWI), and 294–314 (LPLT…FASI).

The protein belongs to the complex I subunit 1 family.

The protein localises to the mitochondrion inner membrane. It carries out the reaction a ubiquinone + NADH + 5 H(+)(in) = a ubiquinol + NAD(+) + 4 H(+)(out). In terms of biological role, core subunit of the mitochondrial membrane respiratory chain NADH dehydrogenase (Complex I) that is believed to belong to the minimal assembly required for catalysis. Complex I functions in the transfer of electrons from NADH to the respiratory chain. The immediate electron acceptor for the enzyme is believed to be ubiquinone. This Choloepus didactylus (Southern two-toed sloth) protein is NADH-ubiquinone oxidoreductase chain 1 (MT-ND1).